The following is a 229-amino-acid chain: Peptidyl-tRNA hydrolase (229 aa).

TRNA is bound at residue Tyr-17. Catalysis depends on His-22, which acts as the Proton acceptor. TRNA-binding residues include Phe-74, Asn-76, and Asn-122. Residues 194–229 (AGKTTRPRKPVRQTANAEASNNSPEASATPQNKDNT) are disordered. A compositionally biased stretch (low complexity) spans 207–223 (TANAEASNNSPEASATP).

It belongs to the PTH family. Monomer.

It localises to the cytoplasm. It catalyses the reaction an N-acyl-L-alpha-aminoacyl-tRNA + H2O = an N-acyl-L-amino acid + a tRNA + H(+). Functionally, hydrolyzes ribosome-free peptidyl-tRNAs (with 1 or more amino acids incorporated), which drop off the ribosome during protein synthesis, or as a result of ribosome stalling. In terms of biological role, catalyzes the release of premature peptidyl moieties from peptidyl-tRNA molecules trapped in stalled 50S ribosomal subunits, and thus maintains levels of free tRNAs and 50S ribosomes. This Desulfovibrio desulfuricans (strain ATCC 27774 / DSM 6949 / MB) protein is Peptidyl-tRNA hydrolase.